Consider the following 160-residue polypeptide: Endoribonuclease YbeY (160 aa).

Residues His121, His125, and His131 each contribute to the Zn(2+) site.

Belongs to the endoribonuclease YbeY family. The cofactor is Zn(2+).

Its subcellular location is the cytoplasm. Functionally, single strand-specific metallo-endoribonuclease involved in late-stage 70S ribosome quality control and in maturation of the 3' terminus of the 16S rRNA. In Syntrophus aciditrophicus (strain SB), this protein is Endoribonuclease YbeY.